Here is a 229-residue protein sequence, read N- to C-terminus: 5'-methylthioadenosine/S-adenosylhomocysteine nucleosidase (229 aa).

Residue Glu-12 is the Proton acceptor of the active site. Residues Gly-78, Ile-152, and 173–174 (ME) contribute to the substrate site. Asp-197 (proton donor) is an active-site residue.

It belongs to the PNP/UDP phosphorylase family. MtnN subfamily.

The catalysed reaction is S-adenosyl-L-homocysteine + H2O = S-(5-deoxy-D-ribos-5-yl)-L-homocysteine + adenine. The enzyme catalyses S-methyl-5'-thioadenosine + H2O = 5-(methylsulfanyl)-D-ribose + adenine. It catalyses the reaction 5'-deoxyadenosine + H2O = 5-deoxy-D-ribose + adenine. Its pathway is amino-acid biosynthesis; L-methionine biosynthesis via salvage pathway; S-methyl-5-thio-alpha-D-ribose 1-phosphate from S-methyl-5'-thioadenosine (hydrolase route): step 1/2. Functionally, catalyzes the irreversible cleavage of the glycosidic bond in both 5'-methylthioadenosine (MTA) and S-adenosylhomocysteine (SAH/AdoHcy) to adenine and the corresponding thioribose, 5'-methylthioribose and S-ribosylhomocysteine, respectively. Also cleaves 5'-deoxyadenosine, a toxic by-product of radical S-adenosylmethionine (SAM) enzymes, into 5-deoxyribose and adenine. The polypeptide is 5'-methylthioadenosine/S-adenosylhomocysteine nucleosidase (Pasteurella multocida (strain Pm70)).